The primary structure comprises 82 residues: MGIFDWKHWIVILIVVVLVFGTKRLKNLGSDVGEAIKGFRKAVNTEEDDKKDQPAAQPAQPLNQPHTIDAQAQKVEEPARKD.

Residues 1–21 (MGIFDWKHWIVILIVVVLVFG) traverse the membrane as a helical segment. A disordered region spans residues 43 to 82 (VNTEEDDKKDQPAAQPAQPLNQPHTIDAQAQKVEEPARKD).

The protein belongs to the TatA/E family. The Tat system comprises two distinct complexes: a TatABC complex, containing multiple copies of TatA, TatB and TatC subunits, and a separate TatA complex, containing only TatA subunits. Substrates initially bind to the TatABC complex, which probably triggers association of the separate TatA complex to form the active translocon.

Its subcellular location is the cell inner membrane. In terms of biological role, part of the twin-arginine translocation (Tat) system that transports large folded proteins containing a characteristic twin-arginine motif in their signal peptide across membranes. TatA could form the protein-conducting channel of the Tat system. This is Sec-independent protein translocase protein TatA from Pseudomonas aeruginosa (strain LESB58).